A 346-amino-acid chain; its full sequence is Dihydroorotase (346 aa).

Positions 17 and 19 each coordinate Zn(2+). Substrate-binding positions include 19–21 and N45; that span reads HVR. Residues K102, H139, and H177 each contribute to the Zn(2+) site. At K102 the chain carries N6-carboxylysine. H139 is a substrate binding site. L222 provides a ligand contact to substrate. A Zn(2+)-binding site is contributed by D250. The active site involves D250. Substrate-binding residues include H254 and A266.

Belongs to the metallo-dependent hydrolases superfamily. DHOase family. Class II DHOase subfamily. In terms of assembly, homodimer. Zn(2+) serves as cofactor.

It catalyses the reaction (S)-dihydroorotate + H2O = N-carbamoyl-L-aspartate + H(+). It participates in pyrimidine metabolism; UMP biosynthesis via de novo pathway; (S)-dihydroorotate from bicarbonate: step 3/3. Its function is as follows. Catalyzes the reversible cyclization of carbamoyl aspartate to dihydroorotate. The chain is Dihydroorotase from Delftia acidovorans (strain DSM 14801 / SPH-1).